A 249-amino-acid chain; its full sequence is Probable proteasome subunit alpha type-2 (249 aa).

Belongs to the peptidase T1A family. In terms of assembly, the 26S proteasome consists of a 20S proteasome core and two 19S regulatory subunits. The 20S proteasome core is composed of 28 subunits that are arranged in four stacked rings, resulting in a barrel-shaped structure. The two end rings are each formed by seven alpha subunits, and the two central rings are each formed by seven beta subunits. The catalytic chamber with the active sites is on the inside of the barrel.

The protein localises to the cytoplasm. It localises to the nucleus. Functionally, the proteasome is a multicatalytic proteinase complex which is characterized by its ability to cleave peptides with Arg, Phe, Tyr, Leu, and Glu adjacent to the leaving group at neutral or slightly basic pH. The proteasome has an ATP-dependent proteolytic activity. The chain is Probable proteasome subunit alpha type-2 (pca-2) from Neurospora crassa (strain ATCC 24698 / 74-OR23-1A / CBS 708.71 / DSM 1257 / FGSC 987).